A 664-amino-acid chain; its full sequence is Bifunctional 3-dehydroquinate synthase/phosphatase (664 aa).

Residues 1–352 are 3-dehydroquinate synthase; sequence MKKIFDDIYV…KIIDKYKNNF (352 aa). NAD(+) is bound by residues 61–66, 95–99, 119–120, Lys-132, Lys-141, and 159–162; these read DGEEYK, GVICD, TS, and FLKT. 3 residues coordinate Zn(2+): Glu-174, His-238, and His-255. Positions 353–664 are GPPA/PPX; that stretch reads LRASIDIGTN…GAILEGVENK (312 aa).

It in the N-terminal section; belongs to the sugar phosphate cyclases superfamily. Dehydroquinate synthase family. In the C-terminal section; belongs to the GppA/Ppx family. In terms of assembly, monomer. NAD(+) serves as cofactor. Requires Co(2+) as cofactor. The cofactor is Zn(2+).

The protein resides in the cytoplasm. It carries out the reaction 7-phospho-2-dehydro-3-deoxy-D-arabino-heptonate = 3-dehydroquinate + phosphate. It participates in metabolic intermediate biosynthesis; chorismate biosynthesis; chorismate from D-erythrose 4-phosphate and phosphoenolpyruvate: step 2/7. This chain is Bifunctional 3-dehydroquinate synthase/phosphatase (aroB), found in Fusobacterium nucleatum subsp. nucleatum (strain ATCC 25586 / DSM 15643 / BCRC 10681 / CIP 101130 / JCM 8532 / KCTC 2640 / LMG 13131 / VPI 4355).